The following is a 132-amino-acid chain: U-scoloptoxin(05)-Er3a (132 aa).

The first 19 residues, 1-19 (MRSWFVFVALLAVVFLPSS), serve as a signal peptide directing secretion.

The protein belongs to the scoloptoxin-05 family. Contains 5 disulfide bonds. As to expression, expressed by the venom gland.

It is found in the secreted. The chain is U-scoloptoxin(05)-Er3a from Ethmostigmus rubripes (Giant centipede).